The chain runs to 183 residues: Interleukin-36 beta (183 aa).

A propeptide spanning residues 1 to 30 is cleaved from the precursor; it reads MMAFPPQSCVHVLPPKSIQMWEPNHNTMHG.

Belongs to the IL-1 family. Interacts with cargo receptor TMED10; the interaction mediates the translocation from the cytoplasm into the ERGIC (endoplasmic reticulum-Golgi intermediate compartment) and thereby secretion. Post-translationally, N-terminal truncation leads to a dramatic enhancement of its activity (&gt;1000-fold).

The protein localises to the cytoplasm. It is found in the secreted. Cytokine that binds to and signals through the IL1RL2/IL-36R receptor which in turn activates NF-kappa-B and MAPK signaling pathways in target cells linked to a pro-inflammatory response. Part of the IL-36 signaling system that is thought to be present in epithelial barriers and to take part in local inflammatory response; similar to the IL-1 system with which it shares the coreceptor IL1RAP. Stimulates production of interleukin-6 and interleukin-8 in synovial fibrobasts, articular chondrocytes and mature adipocytes. Induces expression of a number of antimicrobial peptides including beta-defensin 4 and beta-defensin 103 as well as a number of matrix metalloproteases. Seems to be involved in skin inflammatory response by acting on keratinocytes, dendritic cells and indirectly on T-cells to drive tissue infiltration, cell maturation and cell proliferation. Induces the production of pro-inflammatory cytokines in bone marrow-derived dendritic cells (BMDCs), including IL-12, Il-1 beta, IL-6, TNF-alpha and IL-23, and activates p38 MAPK phosphorylation in BMDCs. Involved in dendritic cell maturation by stimulating the surface expression of CD80, CD86 and MHC class II. Induces the production of IFN-gamma, IL-4 and IL-17 by T-helper 1 (Th1) cells, cultured CD4(+) T-cells and splenocytes. In Mus musculus (Mouse), this protein is Interleukin-36 beta.